The primary structure comprises 106 residues: Large ribosomal subunit protein eL42 (106 aa).

Belongs to the eukaryotic ribosomal protein eL42 family.

This is Large ribosomal subunit protein eL42 (RPL44) from Meyerozyma guilliermondii (strain ATCC 6260 / CBS 566 / DSM 6381 / JCM 1539 / NBRC 10279 / NRRL Y-324) (Yeast).